Consider the following 663-residue polypeptide: Protein KINESIN LIGHT CHAIN-RELATED 2 (663 aa).

The segment covering M1–S14 has biased composition (basic and acidic residues). Disordered regions lie at residues M1–L24 and G86–V146. A Phosphoserine modification is found at S19. The segment covering G86–S100 has biased composition (basic and acidic residues). Polar residues predominate over residues G102 to P111. 11 TPR repeats span residues D147–A181, V200–E233, F243–V276, G285–N318, A329–N363, A369–G402, A411–P444, A454–A487, A495–S528, G537–E570, and L579–K612.

The protein belongs to the kinesin light chain family.

This is Protein KINESIN LIGHT CHAIN-RELATED 2 from Arabidopsis thaliana (Mouse-ear cress).